Consider the following 291-residue polypeptide: Probable xyloglucan endotransglucosylase/hydrolase protein 16 (291 aa).

Positions 1–24 (MGRILNRTVLMTLLVVTMAGTAFS) are cleaved as a signal peptide. One can recognise a GH16 domain in the interval 25–215 (GSFNEEFDLT…WSKAPFTAYY (191 aa)). Glu-101 serves as the catalytic Nucleophile. The Proton donor role is filled by Glu-105. Glu-105 serves as a coordination point for xyloglucan. The N-linked (GlcNAc...) asparagine glycan is linked to Asn-109. Residues 118–120 (HTN), 128–130 (NRE), 194–195 (DW), and Gly-199 each bind xyloglucan. Disulfide bonds link Cys-223–Cys-232 and Cys-272–Cys-286. A xyloglucan-binding site is contributed by Arg-277.

The protein belongs to the glycosyl hydrolase 16 family. XTH group 2 subfamily. Post-translationally, contains at least one intrachain disulfide bond essential for its enzymatic activity.

The protein localises to the secreted. It localises to the cell wall. It is found in the extracellular space. Its subcellular location is the apoplast. The catalysed reaction is breaks a beta-(1-&gt;4) bond in the backbone of a xyloglucan and transfers the xyloglucanyl segment on to O-4 of the non-reducing terminal glucose residue of an acceptor, which can be a xyloglucan or an oligosaccharide of xyloglucan.. Its function is as follows. Catalyzes xyloglucan endohydrolysis (XEH) and/or endotransglycosylation (XET). Cleaves and religates xyloglucan polymers, an essential constituent of the primary cell wall, and thereby participates in cell wall construction of growing tissues. This is Probable xyloglucan endotransglucosylase/hydrolase protein 16 (XTH16) from Arabidopsis thaliana (Mouse-ear cress).